Reading from the N-terminus, the 307-residue chain is uncharacterized protein (307 aa).

In terms of domain architecture, HTH lysR-type spans 11–68 (IRLRHLHTFVAVAQQGTLGRAAETLNLSQPALSKTLNELEQLTGARLFERGRQGAQLT). The segment at residues 28 to 47 (LGRAAETLNLSQPALSKTLN) is a DNA-binding region (H-T-H motif).

Belongs to the LysR transcriptional regulatory family.

This is an uncharacterized protein from Escherichia coli (strain K12).